A 207-amino-acid chain; its full sequence is Urease accessory protein UreG (207 aa).

A GTP-binding site is contributed by 16 to 23 (GPVGSGKT).

The protein belongs to the SIMIBI class G3E GTPase family. UreG subfamily. Homodimer. UreD, UreF and UreG form a complex that acts as a GTP-hydrolysis-dependent molecular chaperone, activating the urease apoprotein by helping to assemble the nickel containing metallocenter of UreC. The UreE protein probably delivers the nickel.

The protein resides in the cytoplasm. Its function is as follows. Facilitates the functional incorporation of the urease nickel metallocenter. This process requires GTP hydrolysis, probably effectuated by UreG. This Cupriavidus metallidurans (strain ATCC 43123 / DSM 2839 / NBRC 102507 / CH34) (Ralstonia metallidurans) protein is Urease accessory protein UreG.